The primary structure comprises 281 residues: MATNFLVHEKIWFDKFKYDDAERRFYEQMNGPVAGASRQENGASVILRDIARARENIQKSLAGTSGPGASSGPSGDHSELVVRIASLEVENQSLRGVVQELQQAISKLEARLNVLEKSSPGHRATAPQTQHVSPMRQVEPPAKKPATPAEDDEDDDIDLFGSDNEEEDKEAAQLREERLRQYAEKKAKKPALVAKSSILLDVKPWDDETDMAQLEACVRSIQLDGLVWGASKLVPVGYGIRKLQIQCVVEDDKVGTDLLEEEITKFEEHVQSVDIAAFNKI.

A2 carries the N-acetylalanine modification. K17 carries the post-translational modification N6-acetyllysine. Phosphoserine is present on residues S37, S44, S60, S86, and S106. The leucine-zipper stretch occupies residues 80-115 (LVVRIASLEVENQSLRGVVQELQQAISKLEARLNVL). K107 is subject to N6-acetyllysine. Position 117 is an N6-acetyllysine; alternate (K117). K117 is modified (N6-succinyllysine; alternate). A disordered region spans residues 118–172 (SSPGHRATAPQTQHVSPMRQVEPPAKKPATPAEDDEDDDIDLFGSDNEEEDKEAA). Phosphoserine is present on S119. A Phosphothreonine modification is found at T129. S133 bears the Phosphoserine mark. Position 147 is a phosphothreonine (T147). The segment covering 149-169 (AEDDEDDDIDLFGSDNEEEDK) has biased composition (acidic residues). Phosphoserine; by CK2 is present on S162. The catalytic (GEF) stretch occupies residues 173–281 (QLREERLRQY…SVDIAAFNKI (109 aa)).

This sequence belongs to the EF-1-beta/EF-1-delta family. In terms of assembly, EF-1 is composed of 4 subunits: alpha, beta, delta isoform 1, and gamma. Isoform 2 interacts with HSF1 and NFE2L2.

It localises to the nucleus. EF-1-beta and EF-1-delta stimulate the exchange of GDP bound to EF-1-alpha to GTP, regenerating EF-1-alpha for another round of transfer of aminoacyl-tRNAs to the ribosome. In terms of biological role, regulates induction of heat-shock-responsive genes through association with heat shock transcription factors and direct DNA-binding at heat shock promoter elements (HSE). This chain is Elongation factor 1-delta (EEF1D), found in Macaca fascicularis (Crab-eating macaque).